The sequence spans 106 residues: Large ribosomal subunit protein uL24 (106 aa).

Belongs to the universal ribosomal protein uL24 family. Part of the 50S ribosomal subunit.

Functionally, one of two assembly initiator proteins, it binds directly to the 5'-end of the 23S rRNA, where it nucleates assembly of the 50S subunit. In terms of biological role, one of the proteins that surrounds the polypeptide exit tunnel on the outside of the subunit. The polypeptide is Large ribosomal subunit protein uL24 (Paramagnetospirillum magneticum (strain ATCC 700264 / AMB-1) (Magnetospirillum magneticum)).